The chain runs to 385 residues: 4-hydroxy-3-methylbut-2-en-1-yl diphosphate synthase (flavodoxin) 2 (385 aa).

4 residues coordinate [4Fe-4S] cluster: cysteine 280, cysteine 283, cysteine 315, and glutamate 322.

It belongs to the IspG family. The cofactor is [4Fe-4S] cluster.

It carries out the reaction (2E)-4-hydroxy-3-methylbut-2-enyl diphosphate + oxidized [flavodoxin] + H2O + 2 H(+) = 2-C-methyl-D-erythritol 2,4-cyclic diphosphate + reduced [flavodoxin]. It participates in isoprenoid biosynthesis; isopentenyl diphosphate biosynthesis via DXP pathway; isopentenyl diphosphate from 1-deoxy-D-xylulose 5-phosphate: step 5/6. Converts 2C-methyl-D-erythritol 2,4-cyclodiphosphate (ME-2,4cPP) into 1-hydroxy-2-methyl-2-(E)-butenyl 4-diphosphate. This is 4-hydroxy-3-methylbut-2-en-1-yl diphosphate synthase (flavodoxin) 2 from Streptomyces coelicolor (strain ATCC BAA-471 / A3(2) / M145).